We begin with the raw amino-acid sequence, 387 residues long: MKRTRIEDDFNPVYPYDTFSTPSIPYVAPPFVSSDGLQEKPPGVLALKYTDPITTNAKHELTLKLGSNITLENGLLSATVPTVSPPLTNSNNSLGLATSAPIAVSANSLTLATAAPLTVSNNQLSINAGRGLVITNNALTVNPTGALGFNNTGALQLNAAGGMRVDGANLILHVAYPFEAINQLTLRLENGLEVTSGGKLNVKLGSGLQFDSNGRIAISNSNRTRSVPSLTTIWSISPTPNCSIYETQDANLFLCLTKNGAHVLGTITIKGLKGALREMHDNALSLKLPFDNQGNLLNCALESSTWRYQETNAVASNALTFMPNSTVYPRNKTAHPGNMLIQISPNITFSVVYNEINSGYAFTFKWSAEPGKPFHPPTAVFCYITEQ.

The protein belongs to the adenoviridae fiber family. In terms of assembly, homotrimer. Interacts with host receptor CXCAR. Interacts (via N-terminal tail region) with pentons.

The protein resides in the virion. Its subcellular location is the host nucleus. In terms of biological role, forms spikes that protrude from each vertex of the icosahedral capsid. Interacts with host receptor CXCAR to provide virion initial attachment to target cell. Fiber proteins are shed during virus entry, when virus is still at the cell surface. The sequence is that of Fiber protein 2 from Homo sapiens (Human).